Reading from the N-terminus, the 187-residue chain is UPF0301 protein Cpha266_0885 (187 aa).

This sequence belongs to the UPF0301 (AlgH) family.

The protein is UPF0301 protein Cpha266_0885 of Chlorobium phaeobacteroides (strain DSM 266 / SMG 266 / 2430).